A 464-amino-acid polypeptide reads, in one-letter code: Capsule biosynthesis protein CapB (464 aa).

Residues Leu65–Trp85 form a helical membrane-spanning segment.

The protein resides in the cell membrane. Its pathway is capsule biogenesis; capsule polysaccharide biosynthesis. In terms of biological role, essential for the synthesis of the polyglutamate capsule of B.anthracis which is one of the principal virulence factors during anthrax infection. May form a polyglutamyl synthetase complex together with proteins CapA and CapC. The polypeptide is Capsule biosynthesis protein CapB (capB) (Bacillus anthracis).